The chain runs to 540 residues: Chaperonin GroEL (540 aa).

ATP-binding positions include 29 to 32, 86 to 90, G413, 478 to 480, and D494; these read TLGP, DGTTT, and DAL.

The protein belongs to the chaperonin (HSP60) family. Forms a cylinder of 14 subunits composed of two heptameric rings stacked back-to-back. Interacts with the co-chaperonin GroES.

It is found in the cytoplasm. The catalysed reaction is ATP + H2O + a folded polypeptide = ADP + phosphate + an unfolded polypeptide.. Together with its co-chaperonin GroES, plays an essential role in assisting protein folding. The GroEL-GroES system forms a nano-cage that allows encapsulation of the non-native substrate proteins and provides a physical environment optimized to promote and accelerate protein folding. The protein is Chaperonin GroEL of Clostridioides difficile (Peptoclostridium difficile).